Consider the following 368-residue polypeptide: Phospho-N-acetylmuramoyl-pentapeptide-transferase (368 aa).

The next 9 helical transmembrane spans lie at 23–43 (YITFRAGAAAVTALIIILVFG), 72–92 (IPTMGGLMIILAIEVSGLLWA), 94–114 (IAEPFVWMVLLAIIWMGAVGF), 139–159 (VALGLIIGGYTFFDPTLSVLL), 170–190 (ITVDYGIWYIPLAIFIVTAVS), 201–221 (GLAAGSTAISVFSLAGFAYLT), 238–258 (AGEVTILSMAIVAACIGFLWF), 265–286 (VFMGDTGSLALGSAVAVIALLI), and 345–365 (KIVIRFWIIEVLLVLTSLLTL).

It belongs to the glycosyltransferase 4 family. MraY subfamily. Requires Mg(2+) as cofactor.

It is found in the cell inner membrane. It catalyses the reaction UDP-N-acetyl-alpha-D-muramoyl-L-alanyl-gamma-D-glutamyl-meso-2,6-diaminopimeloyl-D-alanyl-D-alanine + di-trans,octa-cis-undecaprenyl phosphate = di-trans,octa-cis-undecaprenyl diphospho-N-acetyl-alpha-D-muramoyl-L-alanyl-D-glutamyl-meso-2,6-diaminopimeloyl-D-alanyl-D-alanine + UMP. The protein operates within cell wall biogenesis; peptidoglycan biosynthesis. Catalyzes the initial step of the lipid cycle reactions in the biosynthesis of the cell wall peptidoglycan: transfers peptidoglycan precursor phospho-MurNAc-pentapeptide from UDP-MurNAc-pentapeptide onto the lipid carrier undecaprenyl phosphate, yielding undecaprenyl-pyrophosphoryl-MurNAc-pentapeptide, known as lipid I. In Chloroherpeton thalassium (strain ATCC 35110 / GB-78), this protein is Phospho-N-acetylmuramoyl-pentapeptide-transferase.